The following is a 201-amino-acid chain: Imidazoleglycerol-phosphate dehydratase (201 aa).

The protein belongs to the imidazoleglycerol-phosphate dehydratase family.

The protein localises to the cytoplasm. It carries out the reaction D-erythro-1-(imidazol-4-yl)glycerol 3-phosphate = 3-(imidazol-4-yl)-2-oxopropyl phosphate + H2O. Its pathway is amino-acid biosynthesis; L-histidine biosynthesis; L-histidine from 5-phospho-alpha-D-ribose 1-diphosphate: step 6/9. This is Imidazoleglycerol-phosphate dehydratase from Prochlorococcus marinus subsp. pastoris (strain CCMP1986 / NIES-2087 / MED4).